Here is a 188-residue protein sequence, read N- to C-terminus: Pyridoxal 5'-phosphate synthase subunit PdxT (188 aa).

Position 46-48 (46-48 (GES)) interacts with L-glutamine. C78 serves as the catalytic Nucleophile. L-glutamine contacts are provided by residues R105 and 134–135 (IR). Catalysis depends on charge relay system residues H170 and E172.

Belongs to the glutaminase PdxT/SNO family. As to quaternary structure, in the presence of PdxS, forms a dodecamer of heterodimers. Only shows activity in the heterodimer.

The enzyme catalyses aldehydo-D-ribose 5-phosphate + D-glyceraldehyde 3-phosphate + L-glutamine = pyridoxal 5'-phosphate + L-glutamate + phosphate + 3 H2O + H(+). It catalyses the reaction L-glutamine + H2O = L-glutamate + NH4(+). Its pathway is cofactor biosynthesis; pyridoxal 5'-phosphate biosynthesis. Functionally, catalyzes the hydrolysis of glutamine to glutamate and ammonia as part of the biosynthesis of pyridoxal 5'-phosphate. The resulting ammonia molecule is channeled to the active site of PdxS. The sequence is that of Pyridoxal 5'-phosphate synthase subunit PdxT from Thermotoga petrophila (strain ATCC BAA-488 / DSM 13995 / JCM 10881 / RKU-1).